We begin with the raw amino-acid sequence, 716 residues long: Fusoxypene synthase (716 aa).

The sesterterpenoid synthase stretch occupies residues 4-328 (LSYQSRLIPP…WLSACSRQNT (325 aa)). Asp-96 is a Mg(2+) binding site. Substrate is bound at residue Asp-96. The substrate stretch occupies residues 187-190 (RMTN). Position 231 (Asn-231) interacts with substrate. The substrate stretch occupies residues 235–239 (SYERE). The geranylfarnesyl diphosphate synthase stretch occupies residues 329–711 (WKTNCSIDGK…CLATLSMEGC (383 aa)). The isopentenyl diphosphate site is built by Lys-422, Arg-425, and His-454. Residues Asp-461 and Asp-465 each coordinate Mg(2+). Arg-470 contributes to the dimethylallyl diphosphate binding site. Residue Arg-471 coordinates isopentenyl diphosphate. Positions 548, 549, 587, 594, and 602 each coordinate dimethylallyl diphosphate.

This sequence in the N-terminal section; belongs to the terpene synthase family. It in the C-terminal section; belongs to the FPP/GGPP synthase family.

The catalysed reaction is 4 isopentenyl diphosphate + dimethylallyl diphosphate = (2E,6E,10E,14E)-geranylfarnesyl diphosphate + 4 diphosphate. It catalyses the reaction (2E,6E,10E,14E)-geranylfarnesyl diphosphate = fusoxypene A + diphosphate. The enzyme catalyses (2E,6E,10E,14E)-geranylfarnesyl diphosphate = fusoxypene B + diphosphate. It carries out the reaction (2E,6E,10E,14E)-geranylfarnesyl diphosphate = fusoxypene C + diphosphate. The catalysed reaction is (2E,6E,10E,14E)-geranylfarnesyl diphosphate = (-)-astellatene + diphosphate. Functionally, bifunctional sesterterpenoid synthase that performs both prenyl transferase and terpene cyclase activity, converting isopentenyl diphosphate and dimethylallyl diphosphate into geranylfarnesyl diphosphate (GFPP) and then converting GFPP into the enantiomeric sesterterpenes with a 5-6-7-3-5 ring system fusoxypene A, fusoxypene B, fusoxypene C and (-)-astellatene. The chain is Fusoxypene synthase from Fusarium oxysporum (Fusarium vascular wilt).